We begin with the raw amino-acid sequence, 176 residues long: Large ribosomal subunit protein uL22z (176 aa).

Over residues 154-163 (KEEPVKKEPE) the composition is skewed to basic and acidic residues. Residues 154 to 176 (KEEPVKKEPETQLAAKSKKGASS) form a disordered region.

This sequence belongs to the universal ribosomal protein uL22 family.

The protein is Large ribosomal subunit protein uL22z (RPL17A) of Arabidopsis thaliana (Mouse-ear cress).